Reading from the N-terminus, the 132-residue chain is Antimicrobial protein Ace-AMP1 (132 aa).

Positions 1–27 (MVRVVSLLAASTFILLIMIISSPYANS) are cleaved as a signal peptide. Cystine bridges form between Cys31-Cys76, Cys41-Cys54, Cys55-Cys100, and Cys74-Cys116.

This sequence belongs to the plant LTP family. Highly divergent. In terms of assembly, monomer.

Its function is as follows. Antifungal and antibacterial activity against the Gram-positive bacteria B.megaterium and S.lutea. This Allium cepa (Onion) protein is Antimicrobial protein Ace-AMP1.